A 228-amino-acid chain; its full sequence is Urease accessory protein UreF (228 aa).

The protein belongs to the UreF family. In terms of assembly, ureD, UreF and UreG form a complex that acts as a GTP-hydrolysis-dependent molecular chaperone, activating the urease apoprotein by helping to assemble the nickel containing metallocenter of UreC. The UreE protein probably delivers the nickel.

The protein localises to the cytoplasm. Functionally, required for maturation of urease via the functional incorporation of the urease nickel metallocenter. The polypeptide is Urease accessory protein UreF (Yersinia enterocolitica serotype O:8 / biotype 1B (strain NCTC 13174 / 8081)).